The chain runs to 207 residues: Ribonuclease HII (207 aa).

In terms of domain architecture, RNase H type-2 spans 18 to 206; the sequence is EFIVGVDEVG…VKNILQLLEK (189 aa). Residues Asp24, Glu25, and Asp115 each coordinate a divalent metal cation.

This sequence belongs to the RNase HII family. Mn(2+) is required as a cofactor. Requires Mg(2+) as cofactor.

It is found in the cytoplasm. It carries out the reaction Endonucleolytic cleavage to 5'-phosphomonoester.. Functionally, endonuclease that specifically degrades the RNA of RNA-DNA hybrids. This is Ribonuclease HII from Hydrogenovibrio crunogenus (strain DSM 25203 / XCL-2) (Thiomicrospira crunogena).